We begin with the raw amino-acid sequence, 239 residues long: Peptidyl-tRNA hydrolase (239 aa).

Tyr-14 is a binding site for tRNA. Catalysis depends on His-19, which acts as the Proton acceptor. Phe-64, Asn-66, and Asn-112 together coordinate tRNA. Residues 188 to 239 form a disordered region; the sequence is APPRSSTSKPKAQDNREDAAQAAEERSETRTPPEARPEDTRSALQKLADKFR. The span at 198–239 shows a compositional bias: basic and acidic residues; it reads KAQDNREDAAQAAEERSETRTPPEARPEDTRSALQKLADKFR.

The protein belongs to the PTH family. As to quaternary structure, monomer.

It localises to the cytoplasm. The enzyme catalyses an N-acyl-L-alpha-aminoacyl-tRNA + H2O = an N-acyl-L-amino acid + a tRNA + H(+). Its function is as follows. Hydrolyzes ribosome-free peptidyl-tRNAs (with 1 or more amino acids incorporated), which drop off the ribosome during protein synthesis, or as a result of ribosome stalling. Catalyzes the release of premature peptidyl moieties from peptidyl-tRNA molecules trapped in stalled 50S ribosomal subunits, and thus maintains levels of free tRNAs and 50S ribosomes. This chain is Peptidyl-tRNA hydrolase, found in Jannaschia sp. (strain CCS1).